Here is a 239-residue protein sequence, read N- to C-terminus: Adapter protein MecA (239 aa).

The span at 118 to 128 (EQRTKEKEAQG) shows a compositional bias: basic and acidic residues. The disordered stretch occupies residues 118 to 137 (EQRTKEKEAQGSKRQKSSAR).

Belongs to the MecA family. In terms of assembly, homodimer.

Its function is as follows. Enables the recognition and targeting of unfolded and aggregated proteins to the ClpC protease or to other proteins involved in proteolysis. This Staphylococcus aureus (strain COL) protein is Adapter protein MecA.